We begin with the raw amino-acid sequence, 118 residues long: Large ribosomal subunit protein bL20 (118 aa).

It belongs to the bacterial ribosomal protein bL20 family.

Its function is as follows. Binds directly to 23S ribosomal RNA and is necessary for the in vitro assembly process of the 50S ribosomal subunit. It is not involved in the protein synthesizing functions of that subunit. This is Large ribosomal subunit protein bL20 from Campylobacter curvus (strain 525.92).